Consider the following 575-residue polypeptide: Stage VI sporulation protein D (575 aa).

Positions 159-502 (EELSEPPAHS…ETKEPQTKES (344 aa)) are disordered. A compositionally biased stretch (basic and acidic residues) spans 200 to 212 (GLREELETEKAES). Composition is skewed to acidic residues over residues 229–238 (KEEEESEELA) and 249–264 (ETEESEPEPDPSEIEI). Basic and acidic residues-rich tracts occupy residues 266-275 (EIVKAKKETA), 283-302 (DVREEADSPAETELREHVGA), and 310-325 (AELHSETVIAKEKEET). Residues 438 to 448 (EEEEQEEESFE) are compositionally biased toward acidic residues. The span at 449-464 (IEVRKTPSAEEPKEET) shows a compositional bias: basic and acidic residues. A compositionally biased stretch (polar residues) spans 465–474 (PFQSFQLPES). A compositionally biased stretch (basic and acidic residues) spans 493–502 (ETKEPQTKES). In terms of domain architecture, LysM spans 523-567 (KICIVQQEDTIERLCERYEITSQQLIRMNSLALDDELKAGQILYI).

Functionally, required for assembly of a normal spore coat. May be a component of the innermost layer of the spore coat that aids in its adherence to the prespore. The protein is Stage VI sporulation protein D (spoVID) of Bacillus subtilis (strain 168).